Consider the following 102-residue polypeptide: MTKSELIEAIASKQPHLAHKDVEDAVKKMLEHMSETLANGKRIEIRGFGSFSLHHRPARMGRNPKTGEPVALPAKYVPHFKPGKELRERVNSSRHQAPLRSQ.

Positions 54 to 102 (HHRPARMGRNPKTGEPVALPAKYVPHFKPGKELRERVNSSRHQAPLRSQ) are disordered. Positions 82–91 (PGKELRERVN) are enriched in basic and acidic residues. Residues 93–102 (SRHQAPLRSQ) show a composition bias toward polar residues.

The protein belongs to the bacterial histone-like protein family. As to quaternary structure, heterodimer of an alpha and a beta chain.

Its function is as follows. This protein is one of the two subunits of integration host factor, a specific DNA-binding protein that functions in genetic recombination as well as in transcriptional and translational control. The protein is Integration host factor subunit beta of Halorhodospira halophila (strain DSM 244 / SL1) (Ectothiorhodospira halophila (strain DSM 244 / SL1)).